The primary structure comprises 175 residues: uncharacterized protein (175 aa).

Residues 35-56 show a composition bias toward low complexity; the sequence is LIENSNYDNNNINNNNNNNNTD. The tract at residues 35–70 is disordered; sequence LIENSNYDNNNINNNNNNNNTDNDNDNNNDNEPFYN. Transmembrane regions (helical) follow at residues 106 to 126 and 132 to 152; these read ILSF…FFNY and YFII…KSIF.

The protein localises to the membrane. This is an uncharacterized protein from Dictyostelium discoideum (Social amoeba).